A 213-amino-acid polypeptide reads, in one-letter code: MKAFTKITAIVAPLDRSNVDTDAIIPKQFLKSIKRSGFGPNAFDEWRYLDHGEPGMDNSKRPLNPDFSLNQPRYQGAQILLTRKNFGCGSSREHAPWALDDYGFRAVIAPSFADIFFNNCYKNGLLPIVLTEEQVDRLFKEVEANEGYQLSIDLAEQTLTTPSGETFTFDITEHRKHCLLNGLDEIGLTLQHADEIHAFEEKRRQSQPWLFNG.

This sequence belongs to the LeuD family. LeuD type 1 subfamily. As to quaternary structure, heterodimer of LeuC and LeuD.

The catalysed reaction is (2R,3S)-3-isopropylmalate = (2S)-2-isopropylmalate. It functions in the pathway amino-acid biosynthesis; L-leucine biosynthesis; L-leucine from 3-methyl-2-oxobutanoate: step 2/4. Functionally, catalyzes the isomerization between 2-isopropylmalate and 3-isopropylmalate, via the formation of 2-isopropylmaleate. The chain is 3-isopropylmalate dehydratase small subunit from Neisseria meningitidis serogroup C (strain 053442).